A 458-amino-acid polypeptide reads, in one-letter code: Probable ECA polymerase (458 aa).

11 consecutive transmembrane segments (helical) span residues 3–23 (LAQF…VLTL), 37–57 (VFFS…TCLL), 65–85 (VVPV…YAIY), 112–132 (THLT…IFFL), 154–174 (GVAL…VYFL), 180–200 (AWFF…VIVG), 201–221 (GTRA…IVRG), 222–242 (WISL…MFWL), 340–360 (LVVM…GMII), 377–397 (YKAA…IVLA), and 409–429 (VFFC…YWLF).

The protein belongs to the WzyE family. As to quaternary structure, probably part of a complex composed of WzxE, WzyE and WzzE.

It is found in the cell inner membrane. It participates in bacterial outer membrane biogenesis; enterobacterial common antigen biosynthesis. In terms of biological role, probably involved in the polymerization of enterobacterial common antigen (ECA) trisaccharide repeat units. In Serratia proteamaculans (strain 568), this protein is Probable ECA polymerase.